Here is a 331-residue protein sequence, read N- to C-terminus: Ornithine carbamoyltransferase (331 aa).

Carbamoyl phosphate contacts are provided by residues 55-58 (STRT), Gln-82, Arg-106, and 133-136 (HPTQ). L-ornithine-binding positions include Asn-166, Asp-230, and 234 to 235 (SM). Carbamoyl phosphate-binding positions include 272 to 273 (CL) and Arg-317.

The protein belongs to the aspartate/ornithine carbamoyltransferase superfamily. OTCase family.

Its subcellular location is the cytoplasm. It carries out the reaction carbamoyl phosphate + L-ornithine = L-citrulline + phosphate + H(+). It participates in amino-acid biosynthesis; L-arginine biosynthesis; L-arginine from L-ornithine and carbamoyl phosphate: step 1/3. Functionally, reversibly catalyzes the transfer of the carbamoyl group from carbamoyl phosphate (CP) to the N(epsilon) atom of ornithine (ORN) to produce L-citrulline. The polypeptide is Ornithine carbamoyltransferase (argF) (Neisseria meningitidis serogroup B (strain ATCC BAA-335 / MC58)).